We begin with the raw amino-acid sequence, 739 residues long: Transcription regulator protein BACH1 (739 aa).

A BTB domain is found at cysteine 34–lysine 100. Serine 196 is modified (phosphoserine). Disordered stretches follow at residues methionine 287 to leucine 321 and lysine 344 to valine 391. Basic and acidic residues-rich tracts occupy residues valine 346–glutamate 364 and proline 376–valine 391. Serine 448 bears the Phosphoserine mark. In terms of domain architecture, bZIP spans cysteine 560–leucine 623. The tract at residues arginine 565–lysine 581 is basic motif. Positions isoleucine 585–isoleucine 592 are leucine-zipper. Positions proline 679 to alanine 708 are disordered. Residues glutamine 699–alanine 708 show a composition bias toward low complexity.

Belongs to the bZIP family. CNC subfamily. In terms of assembly, heterodimer of BACH1 and MAFK. Post-translationally, ubiquitinated by the SCF(FBXL17) complex or by the by the SCF(FBXO22) complex, leading to its degradation by the proteasome. Under oxidative stress, reactive oxygen species covalently modify cysteine residues on the bZIP domain of BACH1 and release it from chromatin. If the BTB domain of BACH1 remains intact, its beta1-alpha6 degron is recognized by FBXO22, promoting its ubiquitination and degradation. If the structural integrity of the beta1-alpha6 degron is compromised, FBXL17 will transiently associate with the BACH1 BTB dimer and remodel it into stably bound monomer for ubiquitination and degradation. Ubiquitous.

It is found in the nucleus. In terms of biological role, transcriptional regulator that acts as a repressor or activator, depending on the context. Binds to NF-E2 DNA binding sites. Plays important roles in coordinating transcription activation and repression by MAFK. Together with MAF, represses the transcription of genes under the control of the NFE2L2 oxidative stress pathway. This is Transcription regulator protein BACH1 (Bach1) from Mus musculus (Mouse).